Reading from the N-terminus, the 863-residue chain is Aminopeptidase N (863 aa).

Substrate is bound by residues E124 and 263-267 (GAMEN). H299 is a binding site for Zn(2+). Catalysis depends on E300, which acts as the Proton acceptor. Residues H303 and E322 each contribute to the Zn(2+) site.

Belongs to the peptidase M1 family. Zn(2+) serves as cofactor.

The catalysed reaction is Release of an N-terminal amino acid, Xaa-|-Yaa- from a peptide, amide or arylamide. Xaa is preferably Ala, but may be most amino acids including Pro (slow action). When a terminal hydrophobic residue is followed by a prolyl residue, the two may be released as an intact Xaa-Pro dipeptide.. In terms of biological role, aminopeptidase N is involved in the degradation of intracellular peptides generated by protein breakdown during normal growth as well as in response to nutrient starvation. The chain is Aminopeptidase N (pepN) from Caulobacter vibrioides (strain ATCC 19089 / CIP 103742 / CB 15) (Caulobacter crescentus).